We begin with the raw amino-acid sequence, 505 residues long: MEAIQRYLQFDRSQQLSFLYPLIFQEYIYAFARDHSLNRAILLENPGYDNKSSFLIVKRLITRMYQQNHFIISANDSSQNPFFGRNKNLYSKMISEGFSFIIEIPLSTRLISSEELKGILKSPNLRSIHSIFPFLEDNFSHFHFVLDILIPHPVHLEILFQTLRYWLKDAPSLHLLRXXXXXXXXXXXXXXXXXXXXXXXXXXXXXXXXXXXXXXXXXXXXXXXXXXXXXXXXXXXXXXXXXXXXXXXXXXXXXXXXXXXXXXXXXXXXXXXXXXXXXXXXXXXXXXXXXXXXXXXXXXXXXXXXXXXXXLWFHSERVYIKQLSNHSLDFMGYFSIVRLNPSMVRSQMLENXFLINNAIKKFDTLVPMIPLIGSLSKAKFCNLFGHPISKSARTDLSDSDIMDRFGRICRNLSHYHSGSSKKKSLYRIKYILRLSCAKTLARKHKSTVRAFLKRLGSEFFEEFLMSEEETLCLTFPRVSSPFWGVYGSRIWYLDITCINDLANQQ.

The protein belongs to the intron maturase 2 family. MatK subfamily.

The protein resides in the plastid. It is found in the chloroplast. Functionally, usually encoded in the trnK tRNA gene intron. Probably assists in splicing its own and other chloroplast group II introns. In Allamanda cathartica (Yellow allamanda), this protein is Maturase K.